A 545-amino-acid chain; its full sequence is Carboxypeptidase N subunit 2 (545 aa).

The first 21 residues, 1-21 (MLPGAWLLWTSLLLLARPAQP), serve as a signal peptide directing secretion. One can recognise an LRRNT domain in the interval 22–49 (CPMGCDCFVQEVFCSDEELATVPLDIPP). 3 N-linked (GlcNAc...) asparagine glycosylation sites follow: Asn-74, Asn-111, and Asn-119. LRR repeat units lie at residues 98–119 (RLEDLEVTGSSFLNLSTNIFSN), 122–143 (SLGKLTLNFNMLEALPEGLFQH), 146–167 (ALESLHLQGNQLQALPRRLFQP), 170–191 (HLKTLNLAQNLLAQLPEELFHP), 194–215 (SLQTLKLSNNALSGLPQGVFGK), 218–239 (SLQELFLDSNNISELPPQVFSQ), 242–263 (CLERLWLQRNAITHLPLSIFAS), 266–287 (NLTFLSLQWNMLRVLPAGLFAH), 290–311 (CLVGLSLTHNQLETVAEGTFAH), 314–335 (NLRSLMLSYNAITHLPAGIFRD), 338–359 (ELVKLYLGSNNLTALHPALFQN), and 362–383 (KLELLSLSKNQLTTLPEGIFDT). Asn-228 carries N-linked (GlcNAc...) asparagine glycosylation. Asn-266 carries N-linked (GlcNAc...) asparagine glycosylation. N-linked (GlcNAc...) asparagine glycosylation is found at Asn-348 and Asn-359. Residues 395–447 (NPWQCDCHLAYLFNWLQQYTDRLLNIQTYCAGPAYLKGQVVPALNEKQLVCPV) enclose the LRRCT domain. N-linked (GlcNAc...) asparagine glycosylation occurs at Asn-518.

In terms of assembly, tetramer of two catalytic chains and two glycosylated inactive chains. Whether or not any Cys residues participate in intrachain bonds is unknown, but they do not form interchain disulfide bonds with the 50 kDa catalytic subunit.

The protein resides in the secreted. Its function is as follows. The 83 kDa subunit binds and stabilizes the catalytic subunit at 37 degrees Celsius and keeps it in circulation. Under some circumstances it may be an allosteric modifier of the catalytic subunit. The sequence is that of Carboxypeptidase N subunit 2 (CPN2) from Homo sapiens (Human).